The following is a 147-amino-acid chain: Large ribosomal subunit protein uL22c (147 aa).

The protein belongs to the universal ribosomal protein uL22 family. Part of the 50S ribosomal subunit.

The protein resides in the plastid. Functionally, this protein binds specifically to 23S rRNA. Its function is as follows. The globular domain of the protein is located near the polypeptide exit tunnel on the outside of the subunit, while an extended beta-hairpin is found that lines the wall of the exit tunnel in the center of the 70S ribosome. This Cuscuta obtusiflora (Peruvian dodder) protein is Large ribosomal subunit protein uL22c (rpl22).